The following is a 37-amino-acid chain: Potassium channel toxin alpha-KTx 15.1 (37 aa).

Q1 carries the pyrrolidone carboxylic acid modification. 3 disulfide bridges follow: C8–C28, C13–C33, and C17–C35.

The protein belongs to the short scorpion toxin superfamily. Potassium channel inhibitor family. Alpha-KTx 15 subfamily. Expressed by the venom gland.

It localises to the secreted. In terms of biological role, blocker of voltage-gated potassium channels (600 nM of the toxin induces a block of 25% of hERG currents). May also inhibit Kv4/KCND when coexpressed with DPP6 or DPP10. In adult rat brain, it blocks the transient potassium channels in cerebellum granular cells. Blocks potassium channels by a simple 'plugging mechanism', in which a single toxin molecule finds a specific receptor site in the external vestibule of the potassium channel and thereby occludes the outer entry to the potassium conducting pore. The protein is Potassium channel toxin alpha-KTx 15.1 of Androctonus australis (Sahara scorpion).